Consider the following 59-residue polypeptide: Large ribosomal subunit protein uL30 (59 aa).

The protein belongs to the universal ribosomal protein uL30 family. Part of the 50S ribosomal subunit.

In Buchnera aphidicola subsp. Schizaphis graminum (strain Sg), this protein is Large ribosomal subunit protein uL30.